A 720-amino-acid polypeptide reads, in one-letter code: Polyribonucleotide nucleotidyltransferase (720 aa).

Mg(2+) is bound by residues aspartate 484 and aspartate 490. The region spanning 551–610 (PRMYKINIDPSKIGSVIGSGGKTIRSIIEQTNTTVDIENDGTVVIGAIDEASAKKAIKII) is the KH domain. The S1 motif domain occupies 620-688 (GSIYTGKVTR…NQGRVNLSHR (69 aa)). Residues 697-720 (PISRNRDSQPRRPGPFRPSDRSNS) form a disordered region.

The protein belongs to the polyribonucleotide nucleotidyltransferase family. It depends on Mg(2+) as a cofactor.

It localises to the cytoplasm. It carries out the reaction RNA(n+1) + phosphate = RNA(n) + a ribonucleoside 5'-diphosphate. Involved in mRNA degradation. Catalyzes the phosphorolysis of single-stranded polyribonucleotides processively in the 3'- to 5'-direction. In Dehalococcoides mccartyi (strain ATCC BAA-2100 / JCM 16839 / KCTC 5957 / BAV1), this protein is Polyribonucleotide nucleotidyltransferase.